Consider the following 635-residue polypeptide: Cell pattern formation-associated protein stuA (635 aa).

Disordered stretches follow at residues 1–21 and 63–82; these read MNQTQPYMDVHSSHLSSAQPY and SGVASSQTAPPPPSTSMSSQ. An HTH APSES-type domain is found at 129-235; that stretch reads RVTATLWEDE…HNIGGLLYHP (107 aa). The segment at residues 163–184 is a DNA-binding region (H-T-H motif); it reads GTKLLNVAGMTRGRRDGILKSE. Disordered regions lie at residues 246-480 and 498-635; these read QESQ…ASRS and SQLT…PRRR. 2 stretches are compositionally biased toward low complexity: residues 276-294 and 312-325; these read MQTSIPSQMPQPPTMSSQP and SASSLMGLSNQSSS. Positions 326–355 are enriched in polar residues; the sequence is YDWNNQGMNSGVPNTQPLSIDTTLSNTRSM. Residues 356-380 are compositionally biased toward low complexity; it reads PTTPATTPPGNNLQGMQSYQSQSGY. Basic and acidic residues predominate over residues 460–469; sequence APEHESEYVQ. 2 stretches are compositionally biased toward polar residues: residues 498–513 and 539–571; these read SQLTNDITGSPQQNGS and AASSLYNIVSDTRGSSNGAGSENYTVASNTAPT. The interval 582–605 is nuclear localization domain; that stretch reads KRGREDDDMGRPDSQGDYESKRRR. Over residues 583-592 the composition is skewed to basic and acidic residues; the sequence is RGREDDDMGR.

The protein belongs to the EFG1/PHD1/stuA family.

Its function is as follows. Transcription factor that regulates asexual reproduction. Binds the StuA-response elements (StRE) with the consensus sequence 5'-(A/T)CGCG(T/A)N(A/C)-3' at the promoters of target genes. Controls the expression of 6 secondary metabolite biosynthetic clusters including 2 involved in the synthesis of alkaloids (fumigaclavine and fumitremorgen), 2 clusters of the ETP class (gliotoxin and an unknown ETP-like toxin), a cluster predicted to produce pseurotin A, and the product of the last cluster is unknown. Controls the production of ergot alkaloids during conidiophore development. Controls expression of sspA and gliP. Involved in the induction of immunoglobulin E-independent mast cell degranulation. This is Cell pattern formation-associated protein stuA from Aspergillus fumigatus (strain ATCC MYA-4609 / CBS 101355 / FGSC A1100 / Af293) (Neosartorya fumigata).